The primary structure comprises 153 residues: UPF0540 protein At1g62220 (153 aa).

Positions 1–21 are cleaved as a signal peptide; the sequence is MNATKFVVLLVISVLCAIVTA. Disordered stretches follow at residues 63–82 and 122–153; these read SSAT…YENG and ARAN…GKKD. The segment covering 122–132 has biased composition (low complexity); it reads ARANGKVASAS. A compositionally biased stretch (basic residues) spans 141-153; sequence KKGKGKKGKGKKD.

It belongs to the UPF0540 family.

This Arabidopsis thaliana (Mouse-ear cress) protein is UPF0540 protein At1g62220.